We begin with the raw amino-acid sequence, 188 residues long: ATP synthase subunit b 1 (188 aa).

Residues 7–27 (LSVLALAMLAANPAFAAGGGI) traverse the membrane as a helical segment.

The protein belongs to the ATPase B chain family. As to quaternary structure, F-type ATPases have 2 components, F(1) - the catalytic core - and F(0) - the membrane proton channel. F(1) has five subunits: alpha(3), beta(3), gamma(1), delta(1), epsilon(1). F(0) has three main subunits: a(1), b(2) and c(10-14). The alpha and beta chains form an alternating ring which encloses part of the gamma chain. F(1) is attached to F(0) by a central stalk formed by the gamma and epsilon chains, while a peripheral stalk is formed by the delta and b chains.

Its subcellular location is the cell inner membrane. Functionally, f(1)F(0) ATP synthase produces ATP from ADP in the presence of a proton or sodium gradient. F-type ATPases consist of two structural domains, F(1) containing the extramembraneous catalytic core and F(0) containing the membrane proton channel, linked together by a central stalk and a peripheral stalk. During catalysis, ATP synthesis in the catalytic domain of F(1) is coupled via a rotary mechanism of the central stalk subunits to proton translocation. Its function is as follows. Component of the F(0) channel, it forms part of the peripheral stalk, linking F(1) to F(0). The protein is ATP synthase subunit b 1 of Roseobacter denitrificans (strain ATCC 33942 / OCh 114) (Erythrobacter sp. (strain OCh 114)).